Consider the following 541-residue polypeptide: Peptidyl-prolyl isomerase cwc-27 (541 aa).

Residues 11–193 (PTASAIIHTT…YPIKITRIEI (183 aa)) form the PPIase cyclophilin-type domain. 2 disordered regions span residues 199–443 (DDMQ…GQAD) and 513–541 (TLKE…RDRH). Composition is skewed to basic and acidic residues over residues 279–307 (AKRD…ESRR), 316–348 (QKKE…KTNE), and 361–374 (IHSE…KKSA). The segment covering 432-442 (DVEDGEQDGQA) has biased composition (acidic residues). Composition is skewed to basic and acidic residues over residues 513-525 (TLKE…RDAK) and 532-541 (AWDRGRRDRH).

Belongs to the cyclophilin-type PPIase family. CWC27 subfamily. Associated with the spliceosome.

The protein localises to the cytoplasm. The protein resides in the nucleus. It carries out the reaction [protein]-peptidylproline (omega=180) = [protein]-peptidylproline (omega=0). PPIases accelerate the folding of proteins. It catalyzes the cis-trans isomerization of proline imidic peptide bonds in oligopeptides. Involved in pre-mRNA splicing. This chain is Peptidyl-prolyl isomerase cwc-27 (cwc-27), found in Neurospora crassa (strain ATCC 24698 / 74-OR23-1A / CBS 708.71 / DSM 1257 / FGSC 987).